A 204-amino-acid polypeptide reads, in one-letter code: UPF0228 protein MA_0511 (204 aa).

Belongs to the UPF0228 family.

The protein is UPF0228 protein MA_0511 of Methanosarcina acetivorans (strain ATCC 35395 / DSM 2834 / JCM 12185 / C2A).